A 496-amino-acid chain; its full sequence is Glycerol kinase (496 aa).

Residue threonine 12 coordinates ADP. ATP-binding residues include threonine 12, threonine 13, and serine 14. Threonine 12 contributes to the sn-glycerol 3-phosphate binding site. Arginine 16 serves as a coordination point for ADP. Positions 82, 83, and 134 each coordinate sn-glycerol 3-phosphate. Arginine 82, glutamate 83, and tyrosine 134 together coordinate glycerol. At histidine 230 the chain carries Phosphohistidine; by HPr. Position 244 (aspartate 244) interacts with sn-glycerol 3-phosphate. Glycerol contacts are provided by aspartate 244 and glutamine 245. 2 residues coordinate ADP: threonine 266 and glycine 309. Residues threonine 266, glycine 309, glutamine 313, and glycine 410 each coordinate ATP. Residues glycine 410 and asparagine 414 each coordinate ADP.

It belongs to the FGGY kinase family. Homotetramer and homodimer (in equilibrium). The phosphoenolpyruvate-dependent sugar phosphotransferase system (PTS), including enzyme I, and histidine-containing protein (HPr) are required for the phosphorylation, which leads to the activation of the enzyme.

The enzyme catalyses glycerol + ATP = sn-glycerol 3-phosphate + ADP + H(+). The protein operates within polyol metabolism; glycerol degradation via glycerol kinase pathway; sn-glycerol 3-phosphate from glycerol: step 1/1. With respect to regulation, activated by phosphorylation and inhibited by fructose 1,6-bisphosphate (FBP). Functionally, key enzyme in the regulation of glycerol uptake and metabolism. Catalyzes the phosphorylation of glycerol to yield sn-glycerol 3-phosphate. This Bacillus anthracis (strain A0248) protein is Glycerol kinase.